A 543-amino-acid polypeptide reads, in one-letter code: NADH-ubiquinone oxidoreductase chain 4 (543 aa).

Helical transmembrane passes span 5–25, 84–104, 129–149, 161–181, 182–202, 213–233, 254–274, 287–307, 321–341, 350–370, 377–397, 416–436, 456–476, and 501–521; these read FLMF…IIWS, VVAF…YILF, VDGI…IALM, SYLI…LVLD, ILLF…LIGL, FYIF…ILTM, IQIF…PTIF, PLGG…YGIF, YTYI…FSTL, IAYS…SNTI, ILLG…VGGV, MAPL…GVPL, LLGL…IFLF, and FYAL…PSII.

The protein belongs to the complex I subunit 4 family.

Its subcellular location is the mitochondrion membrane. The catalysed reaction is a ubiquinone + NADH + 5 H(+)(in) = a ubiquinol + NAD(+) + 4 H(+)(out). Its function is as follows. Core subunit of the mitochondrial membrane respiratory chain NADH dehydrogenase (Complex I) that is believed to belong to the minimal assembly required for catalysis. Complex I functions in the transfer of electrons from NADH to the respiratory chain. The immediate electron acceptor for the enzyme is believed to be ubiquinone. The sequence is that of NADH-ubiquinone oxidoreductase chain 4 (ndh-4) from Neurospora crassa (strain ATCC 24698 / 74-OR23-1A / CBS 708.71 / DSM 1257 / FGSC 987).